A 771-amino-acid polypeptide reads, in one-letter code: MATLGTPRIGPRRELKTALESYWSGKSDESALLEAAAGLRAANWARQKSLGVTVIPSNDFTFYDHVLDTSVMVGAIPDIYGWKSGPVPLATYFAMARGAQGGNDDAACAHGHQGDGHAHGAPAQEMTKWFDTNYHYMVPEFTSGQRFQLSSLKAIDEYREAKALGYQTRPVLLGPVTYLKLGKSKDANLDPLSLLPDLLPVYIDVLKRLAAEGAEWVQIDEPCLVLDLDDATRKVLRAAYEQLADALPKLKVMLTTYFGGLGDNLDAALSLPVTGLHIDLARAPDQLEAVAAKAPHDLILSLGVIDGRNIWRANLPALLDRLEPVVSERGADRVQIAPSCSLLHVPIDVSLETDLDAELKSWLAFSVQKMGELATLGEALAKGRASVADALKASADAAAARKASPKVHDAKVEGRIAAVTSDMARRKSAFAERAKLQRERFGLPPFPTTTIGSFPQTAEVRKARSAHAKGTLSDTDYEKFLQEETARTIRWQEDIGLDVLVHGEFERNDMVQYFGEQLSGFAFTRHGWVQSYGSRCVRPPVLFGDVSRPRPMTVGWWKYAQSLTAKPMKGMLTGPVTILNWSFVRDDVPRSLACRQIALAIRDEVSDLEQAGATMIQIDEAALREGLPLRRSEWKTYLDWAVECFRLCASGVADATQIHTHMCYSEFNDIIDAIASMDADVISIETSRSKMELLDAFKTYKYPNEIGPGVYDIHSPRVPAVDEMTGLLKLARERLSDRQIWINPDCGLKTRKWEEVRPALVNMVEAAKLMR.

Residues 13–16 (RELK) and lysine 128 each bind 5-methyltetrahydropteroyltri-L-glutamate. L-homocysteine-binding positions include 451–453 (IGS) and glutamate 504. L-methionine contacts are provided by residues 451-453 (IGS) and glutamate 504. Residues 535–536 (RC) and tryptophan 581 each bind 5-methyltetrahydropteroyltri-L-glutamate. L-homocysteine is bound at residue aspartate 619. Aspartate 619 is a binding site for L-methionine. Residue glutamate 625 coordinates 5-methyltetrahydropteroyltri-L-glutamate. 3 residues coordinate Zn(2+): histidine 661, cysteine 663, and glutamate 685. The active-site Proton donor is histidine 714. A Zn(2+)-binding site is contributed by cysteine 746.

The protein belongs to the vitamin-B12 independent methionine synthase family. Zn(2+) is required as a cofactor.

It carries out the reaction 5-methyltetrahydropteroyltri-L-glutamate + L-homocysteine = tetrahydropteroyltri-L-glutamate + L-methionine. Its pathway is amino-acid biosynthesis; L-methionine biosynthesis via de novo pathway; L-methionine from L-homocysteine (MetE route): step 1/1. In terms of biological role, catalyzes the transfer of a methyl group from 5-methyltetrahydrofolate to homocysteine resulting in methionine formation. In Nitrobacter winogradskyi (strain ATCC 25391 / DSM 10237 / CIP 104748 / NCIMB 11846 / Nb-255), this protein is 5-methyltetrahydropteroyltriglutamate--homocysteine methyltransferase.